Reading from the N-terminus, the 2513-residue chain is Highly reducing polyketide synthase ACRTS2 (2513 aa).

A Ketosynthase family 3 (KS3) domain is found at aspartate 4 to arginine 429. Active-site for beta-ketoacyl synthase activity residues include cysteine 174, histidine 313, and histidine 353. The tract at residues valine 547 to threonine 875 is malonyl-CoA:ACP transacylase (MAT) domain. Serine 635 acts as the For malonyltransferase activity in catalysis. An N-terminal hotdog fold region spans residues histidine 942–leucine 1074. The segment at histidine 942 to aspartate 1253 is dehydratase (DH) domain. The PKS/mFAS DH domain maps to histidine 942–glutamine 1254. Catalysis depends on histidine 974, which acts as the Proton acceptor; for dehydratase activity. Residues alanine 1092–glutamine 1254 are C-terminal hotdog fold. The active-site Proton donor; for dehydratase activity is aspartate 1161. The interval serine 1407–proline 1600 is methyltransferase (CMet) domain. Positions glycine 1816–valine 2127 are enoylreductase (ER) domain. The ketoreductase (KR) domain stretch occupies residues alanine 2152–valine 2327. Residues aspartate 2433 to arginine 2510 form the Carrier domain. Serine 2470 is subject to O-(pantetheine 4'-phosphoryl)serine.

The protein operates within mycotoxin biosynthesis. Its function is as follows. Highly reducing polyketide synthase; part of the gene cluster that mediates the biosynthesis of the host-selective toxins (HSTs) ACR-toxins responsible for brown spot of rough lemon disease by the rough lemon pathotype. ACR-toxins cause uncoupling of mitochondrial oxidative-phosphorylation similar to that of classic protonophore. The structure of the major form of ACR-toxin (ACR-toxin I) consists of an alpha-dihydropyrone ring in a 19-carbon polyalcohol, a typical polyketide structure. Minor toxins were characterized as having a pyrone ring with polyalcohol side chains different in length and showing weaker toxicity. The highly reducing polyketide synthase ACRTS2 has all necessary enzymatic domains for multiple cycles of condensation and beta-keto processing. The cytochrome P450 monooxygenase ACRTS1 has also been shown to be essential for ACR-toxin biosynthesis, however its exact role in the pathway has not been elucidated yet. In Alternaria alternata (Alternaria rot fungus), this protein is Highly reducing polyketide synthase ACRTS2.